The chain runs to 273 residues: Dermonecrotic toxin LspaSicTox-alphaIA2iii (273 aa).

The active site involves His-5. Mg(2+) contacts are provided by Glu-25 and Asp-27. The active-site Nucleophile is the His-41. 2 disulfides stabilise this stretch: Cys-45–Cys-51 and Cys-47–Cys-190. Position 85 (Asp-85) interacts with Mg(2+).

This sequence belongs to the arthropod phospholipase D family. Class II subfamily. The cofactor is Mg(2+). Expressed by the venom gland.

It is found in the secreted. It catalyses the reaction an N-(acyl)-sphingosylphosphocholine = an N-(acyl)-sphingosyl-1,3-cyclic phosphate + choline. The enzyme catalyses an N-(acyl)-sphingosylphosphoethanolamine = an N-(acyl)-sphingosyl-1,3-cyclic phosphate + ethanolamine. The catalysed reaction is a 1-acyl-sn-glycero-3-phosphocholine = a 1-acyl-sn-glycero-2,3-cyclic phosphate + choline. It carries out the reaction a 1-acyl-sn-glycero-3-phosphoethanolamine = a 1-acyl-sn-glycero-2,3-cyclic phosphate + ethanolamine. Its function is as follows. Dermonecrotic toxins cleave the phosphodiester linkage between the phosphate and headgroup of certain phospholipids (sphingolipid and lysolipid substrates), forming an alcohol (often choline) and a cyclic phosphate. This toxin acts on sphingomyelin (SM). It may also act on ceramide phosphoethanolamine (CPE), lysophosphatidylcholine (LPC) and lysophosphatidylethanolamine (LPE), but not on lysophosphatidylserine (LPS), and lysophosphatidylglycerol (LPG). It acts by transphosphatidylation, releasing exclusively cyclic phosphate products as second products. Induces dermonecrosis, hemolysis, increased vascular permeability, edema, inflammatory response, and platelet aggregation. This is Dermonecrotic toxin LspaSicTox-alphaIA2iii from Loxosceles spadicea (Recluse spider).